Reading from the N-terminus, the 148-residue chain is Snaclec alboaggregin-D subunit beta (148 aa).

An N-terminal signal peptide occupies residues 1–23 (MGRFISVSFGLLVVFLSLSGAGA). Residues cysteine 27 and cysteine 38 are joined by a disulfide bond. The C-type lectin domain maps to 34 to 145 (YDLYCYKVFK…CNSTYSFVCK (112 aa)). Asparagine 47 is a glycosylation site (N-linked (GlcNAc...) asparagine). 2 disulfide bridges follow: cysteine 55–cysteine 144 and cysteine 121–cysteine 136. The N-linked (GlcNAc...) asparagine glycan is linked to asparagine 137.

In terms of assembly, tetramer of heterodimers of alpha and beta subunits (alphabeta)(4); disulfide-linked. In terms of tissue distribution, expressed by the venom gland.

It is found in the secreted. Functionally, snaclec that induces human platelet aggregation in the absence of any cofactor with the EC(50) of 0.25 nM and causes tyrosine phosphorylation in human platelets. Antibodies against either platelet GPIbalpha (GP1BA) or GPVI (GP6) inhibit alboaggregin D-induced platelet aggregation. Only the combination of these two antibodies completely inhibit aggregation, suggesting that it acts through both GPIbalpha (GP1BA) and GPVI (GP6). This chain is Snaclec alboaggregin-D subunit beta, found in Trimeresurus albolabris (White-lipped pit viper).